Here is a 308-residue protein sequence, read N- to C-terminus: Oxygen-dependent coproporphyrinogen-III oxidase (308 aa).

Serine 100 contacts substrate. A divalent metal cation contacts are provided by histidine 104 and histidine 114. Histidine 114 serves as the catalytic Proton donor. 116-118 (NFR) serves as a coordination point for substrate. 2 residues coordinate a divalent metal cation: histidine 153 and histidine 183. An important for dimerization region spans residues 248–283 (YVEFNLVFDRGTIFGLQSGGRTESILSSMPPMATWK). A substrate-binding site is contributed by 266–268 (GGR).

It belongs to the aerobic coproporphyrinogen-III oxidase family. As to quaternary structure, homodimer. Requires a divalent metal cation as cofactor.

It is found in the cytoplasm. It carries out the reaction coproporphyrinogen III + O2 + 2 H(+) = protoporphyrinogen IX + 2 CO2 + 2 H2O. It participates in porphyrin-containing compound metabolism; protoporphyrin-IX biosynthesis; protoporphyrinogen-IX from coproporphyrinogen-III (O2 route): step 1/1. Functionally, involved in the heme biosynthesis. Catalyzes the aerobic oxidative decarboxylation of propionate groups of rings A and B of coproporphyrinogen-III to yield the vinyl groups in protoporphyrinogen-IX. This chain is Oxygen-dependent coproporphyrinogen-III oxidase, found in Francisella philomiragia subsp. philomiragia (strain ATCC 25017 / CCUG 19701 / FSC 153 / O#319-036).